We begin with the raw amino-acid sequence, 660 residues long: Bifunctional polymyxin resistance protein ArnA (660 aa).

The formyltransferase ArnAFT stretch occupies residues 1 to 304 (MKTVVFAYHD…MLGLVQGSRL (304 aa)). 86–88 (HLI) serves as a coordination point for (6R)-10-formyltetrahydrofolate. H104 (proton donor; for formyltransferase activity) is an active-site residue. Residues R114 and 136-140 (VKRAD) each bind (6R)-10-formyltetrahydrofolate. A dehydrogenase ArnADH region spans residues 314–660 (RRTRVLILGV…RTVDLTDKPS (347 aa)). NAD(+) is bound by residues D347 and 368–369 (DI). UDP-alpha-D-glucuronate-binding positions include A393, Y398, and 432–433 (TS). E434 (proton acceptor; for decarboxylase activity) is an active-site residue. UDP-alpha-D-glucuronate is bound by residues R460, N492, 526-535 (KLIDGGKQKR), and Y613. The active-site Proton donor; for decarboxylase activity is R619.

In the N-terminal section; belongs to the Fmt family. UDP-L-Ara4N formyltransferase subfamily. It in the C-terminal section; belongs to the NAD(P)-dependent epimerase/dehydratase family. UDP-glucuronic acid decarboxylase subfamily. Homohexamer, formed by a dimer of trimers.

It catalyses the reaction UDP-alpha-D-glucuronate + NAD(+) = UDP-beta-L-threo-pentopyranos-4-ulose + CO2 + NADH. The enzyme catalyses UDP-4-amino-4-deoxy-beta-L-arabinose + (6R)-10-formyltetrahydrofolate = UDP-4-deoxy-4-formamido-beta-L-arabinose + (6S)-5,6,7,8-tetrahydrofolate + H(+). Its pathway is nucleotide-sugar biosynthesis; UDP-4-deoxy-4-formamido-beta-L-arabinose biosynthesis; UDP-4-deoxy-4-formamido-beta-L-arabinose from UDP-alpha-D-glucuronate: step 1/3. It functions in the pathway nucleotide-sugar biosynthesis; UDP-4-deoxy-4-formamido-beta-L-arabinose biosynthesis; UDP-4-deoxy-4-formamido-beta-L-arabinose from UDP-alpha-D-glucuronate: step 3/3. The protein operates within bacterial outer membrane biogenesis; lipopolysaccharide biosynthesis. Its function is as follows. Bifunctional enzyme that catalyzes the oxidative decarboxylation of UDP-glucuronic acid (UDP-GlcUA) to UDP-4-keto-arabinose (UDP-Ara4O) and the addition of a formyl group to UDP-4-amino-4-deoxy-L-arabinose (UDP-L-Ara4N) to form UDP-L-4-formamido-arabinose (UDP-L-Ara4FN). The modified arabinose is attached to lipid A and is required for resistance to polymyxin and cationic antimicrobial peptides. This is Bifunctional polymyxin resistance protein ArnA from Shigella flexneri serotype 5b (strain 8401).